A 496-amino-acid polypeptide reads, in one-letter code: UDP-N-acetylmuramoylalanine--D-glutamate ligase (496 aa).

130 to 136 (GTNGKTT) contributes to the ATP binding site.

It belongs to the MurCDEF family.

It is found in the cytoplasm. It carries out the reaction UDP-N-acetyl-alpha-D-muramoyl-L-alanine + D-glutamate + ATP = UDP-N-acetyl-alpha-D-muramoyl-L-alanyl-D-glutamate + ADP + phosphate + H(+). The protein operates within cell wall biogenesis; peptidoglycan biosynthesis. Its function is as follows. Cell wall formation. Catalyzes the addition of glutamate to the nucleotide precursor UDP-N-acetylmuramoyl-L-alanine (UMA). The chain is UDP-N-acetylmuramoylalanine--D-glutamate ligase from Mycobacterium bovis (strain ATCC BAA-935 / AF2122/97).